The sequence spans 364 residues: Anthranilate phosphoribosyltransferase 1 (364 aa).

Residues G102, 105-106 (GD), T110, 112-115 (NIST), 130-138 (KHGNRSASS), and S142 contribute to the 5-phospho-alpha-D-ribose 1-diphosphate site. G102 is an anthranilate binding site. Residue S114 participates in Mg(2+) binding. N133 serves as a coordination point for anthranilate. R188 is an anthranilate binding site. Residues D247 and E248 each coordinate Mg(2+).

It belongs to the anthranilate phosphoribosyltransferase family. In terms of assembly, homodimer. Mg(2+) serves as cofactor.

It carries out the reaction N-(5-phospho-beta-D-ribosyl)anthranilate + diphosphate = 5-phospho-alpha-D-ribose 1-diphosphate + anthranilate. Its pathway is amino-acid biosynthesis; L-tryptophan biosynthesis; L-tryptophan from chorismate: step 2/5. Its function is as follows. Catalyzes the transfer of the phosphoribosyl group of 5-phosphorylribose-1-pyrophosphate (PRPP) to anthranilate to yield N-(5'-phosphoribosyl)-anthranilate (PRA). The polypeptide is Anthranilate phosphoribosyltransferase 1 (Nostoc sp. (strain PCC 7120 / SAG 25.82 / UTEX 2576)).